The following is a 759-amino-acid chain: Olfactomedin-like protein 2B (759 aa).

Positions 1-20 are cleaved as a signal peptide; sequence MAKSLLLVLCFALVTTLGWG. 2 coiled-coil regions span residues 40 to 68 and 179 to 209; these read TEDE…KVKA and KLEE…MNKR. Residues Asn187 and Asn213 are each glycosylated (N-linked (GlcNAc...) asparagine). Disordered stretches follow at residues 346–396 and 456–494; these read TRRP…VSAS and THTA…EEED. A compositionally biased stretch (low complexity) spans 356 to 396; that stretch reads AAVTADAGTTSAGTPTTALPSARLPASTAAPSTPDPAVSAS. Positions 502–759 constitute an Olfactomedin-like domain; it reads RCKDTLSTIT…QVTYHVIFAY (258 aa). Cys503 and Cys689 are joined by a disulfide. Asn704 is a glycosylation site (N-linked (GlcNAc...) asparagine).

Homodimer. Binds to heparin and chondroitin sulfate E. O-glycosylated and N-glycosylated.

It is found in the secreted. The sequence is that of Olfactomedin-like protein 2B (OLFML2B) from Bos taurus (Bovine).